The chain runs to 65 residues: Transcriptional regulatory protein SenS (65 aa).

Positions 11 to 31 form a DNA-binding region, H-T-H motif; sequence RFRKRKTYGNQILPLELLIEK.

The protein to B.natto SenN.

Its function is as follows. Regulates the expression of extracellular-protein genes of Bacillus subtilis. This is Transcriptional regulatory protein SenS (senS) from Bacillus subtilis (strain 168).